The chain runs to 261 residues: Na(+)-translocating NADH-quinone reductase subunit C (261 aa).

Residues 11–31 (LLVALVVCLVSSVFVAGAAVA) traverse the membrane as a helical segment. Residue threonine 230 is modified to FMN phosphoryl threonine.

The protein belongs to the NqrC family. In terms of assembly, composed of six subunits; NqrA, NqrB, NqrC, NqrD, NqrE and NqrF. FMN serves as cofactor.

The protein localises to the cell inner membrane. The enzyme catalyses a ubiquinone + n Na(+)(in) + NADH + H(+) = a ubiquinol + n Na(+)(out) + NAD(+). NQR complex catalyzes the reduction of ubiquinone-1 to ubiquinol by two successive reactions, coupled with the transport of Na(+) ions from the cytoplasm to the periplasm. NqrA to NqrE are probably involved in the second step, the conversion of ubisemiquinone to ubiquinol. This is Na(+)-translocating NADH-quinone reductase subunit C from Pseudomonas aeruginosa (strain ATCC 15692 / DSM 22644 / CIP 104116 / JCM 14847 / LMG 12228 / 1C / PRS 101 / PAO1).